A 428-amino-acid chain; its full sequence is Histidine--tRNA ligase (428 aa).

The protein belongs to the class-II aminoacyl-tRNA synthetase family. In terms of assembly, homodimer.

The protein resides in the cytoplasm. The enzyme catalyses tRNA(His) + L-histidine + ATP = L-histidyl-tRNA(His) + AMP + diphosphate + H(+). The chain is Histidine--tRNA ligase from Pseudomonas entomophila (strain L48).